Here is a 67-residue protein sequence, read N- to C-terminus: MSLELLSQLETKIQTALETIELLKLELDEEKEKAANLAEQNHQLKQELSSWNDKITGLVGLLSNQVD.

Residues 3–59 (LELLSQLETKIQTALETIELLKLELDEEKEKAANLAEQNHQLKQELSSWNDKITGLV) are a coiled coil.

This sequence belongs to the ZapB family. As to quaternary structure, homodimer. The ends of the coiled-coil dimer bind to each other, forming polymers. Interacts with FtsZ.

It localises to the cytoplasm. In terms of biological role, non-essential, abundant cell division factor that is required for proper Z-ring formation. It is recruited early to the divisome by direct interaction with FtsZ, stimulating Z-ring assembly and thereby promoting cell division earlier in the cell cycle. Its recruitment to the Z-ring requires functional FtsA or ZipA. The protein is Cell division protein ZapB of Shewanella amazonensis (strain ATCC BAA-1098 / SB2B).